Reading from the N-terminus, the 55-residue chain is Spermatid nuclear transition protein 1 (55 aa).

The segment covering 1-42 (MSTSRKLKTHGMRRGKNRAPHKGVKRGGSKRKYRKSVLKSRK) has biased composition (basic residues). A disordered region spans residues 1 to 55 (MSTSRKLKTHGMRRGKNRAPHKGVKRGGSKRKYRKSVLKSRKRGDDASRNYRSHL). Residues S36 and S40 each carry the phosphoserine modification.

The protein belongs to the nuclear transition protein 1 family. Testis-specific.

It is found in the nucleus. The protein resides in the chromosome. Plays a key role in the replacement of histones to protamine in the elongating spermatids of mammals. In condensing spermatids, loaded onto the nucleosomes, where it promotes the recruitment and processing of protamines, which are responsible for histone eviction. The histone H2AB1-H2BC1/TH2B dimer is required for loading of TNP1 onto chromatin. This chain is Spermatid nuclear transition protein 1, found in Mus musculus (Mouse).